A 7094-amino-acid chain; its full sequence is MSKINKYGLELHWAPEFPWMFEDAEEKLDNPSSSEVDIVCSTTAQKLETGGICPENHVMVDCRRLLKQECCVQSSLIREIVMNTRPYDLEVLLQDALQSREAVLVTPPLGMSLEACYVRGCNPNGWTMGLFRRRSVCNTGRCAVNKHVAYQLYMIDPAGVCFGAGQFVGWVIPLAFMPVQSRKFIVPWVMYLRKCGEKGAYNKDHKRGGFEHVYNFKVEDAYDLVHDEPKGKFSKKAYALIRGYRGVKPLLYVDQYGCDYTGGLADGLEAYADKTLQEMKALFPIWSQELPFDVTVAWHVVRDPRYVMRLQSASTIRSVAYVANPTEDLCDGSVVIKEPVHVYADDSIILRQHNLVDIMSCFYMEADAVVNAFYGVDLKDCGFVMQFGYIDCEQDLCDFKGWVPGNMIDGFACTTCGHVYETGDLLAQSSGVLPVNPVLHTKSAAGYGGFGCKDSFTLYGQTVVYFGGCVYWSPARNIWIPILKSSVKSYDGLVYTGVVGCKAIVKETNLICKALYLDYVQHKCGNLHQRELLGVSDVWHKQLLLNRGVYKPLLENIDYFNMRRAKFSLETFTVCADGFMPFLLDDLVPRAYYLAVSGQAFCDYADKICHAVVSKSKELLDVSLDSLSAAIHYLNSKIVDLAQHFSDFGTSFVSKIVHFFKTFTTSTALAFAWVLFHVLHGAYIVVESDIYFVKNIPRYASAVAQAFRSVAKVVLDSLRVTFIDGLSCFKIGRRRICLSGSKIYEVERGLLHSSQLPLDVYDLTMPSQVQKAKQKPIYLKGSGSDFSLADSVVEVVTTSLTPCGYSEPPKVADKICIVDNVYMAKAGDKYYPVVVDGHVGLLDQAWRVPCAGRRVTFKEQPTVNEIASTPKTIKVFYELDKDFNTILNTACGVFEVDDTVDMEEFYAVVVDAIEEKLSPCKELEGVGAKVSAFLQKLEDNSLFLFDEAGEEVLASKLYCAFTAPEDDDFLEESGVEEDDVEGEETDLTVTSAGEPCVASEQEESSEILEDTLDDGPCVETSDSQVEEDVEMSDFADLESVIQDYENVCFEFYTTEPEFVKVLDLYVPKATRNNCWLRSVLAVMQKLPCQFKDKNLQDLWVLYKQQYSQLFVDTLVNKIPANIVVPQGGYVADFAYWFLTLCDWQCVAYWKCIKCDLALKLKGLDAMFFYGDVVSHVCKCGESMVLIDVDVPFTAHFALKDKLFCAFITKRSVYKAACVVDVNDSHSMAVVDGKQIDDHRVTSITSDKFDFIIGHGMSFSMTTFEIAQLYGSCITPNVCFVKGDIIKVSKRVKAEVVVNPANGHMAHGGGVAKAIAVAAGQQFVKETTDMVKSKGVCATGDCYVSTGGKLCKTVLNVVGPDARTQGKQSYALLERVYKHLNKYDCVVTTLISAGIFSVPSDVSLTYLLGTAEKQVVLVSNNQEDFDLISKCQITAVEGTKKLAERLSFNVGRSIVYETDANKLILSNDVAFVSTFNVLQDVLSLRHDIALDDDARTFVQSNVDVVPEGWRVVNKFYQINGVRTVKYFECPGGIDICSQDKVFGYVQQGSFNKATVAQIKALFLDKVDILLTVDGVNFTNRFVPVGENFGKSLGNVFCDGVNVTKHKCDINYKGKVFFQFDNLSSEDLKAVRSSFNFDQKELLAYYNMLVNCSKWQVVFNGKYFTFKQANNNCFVNVSCLMLQSLNLKFKIVQWQEAWLEFRSGRPARFVSLVLAKGGFKFGDPADSRDFLRVVFSQVDLTGAICDFEIACKCGVKQEQRTGVDAVMHFGTLSREDLEIGYTVDCSCGKKLIHCVRFDVPFLICSNTPASVKLPKGVGSANIFKGDKVGHYVHVKCEQSYQLYDASNVKKVTDVTGNLSDCLYLKNLKQTFKSVLTTYYLDDVKKIEYKPDLSQYYCDGGKYYTQRIIKAQFKTFEKVDGVYTNFKLIGHTICDILNAKLGFDSSKEFVEYKVTEWPTATGDVVLATDDLYVKRYERGCITFGKPVIWLSHEQASLNSLTYFNRPLLVDENKFDVLKVDDVDDGGDISESDAKESKEINIIKLSGVKKPFKVEDSVIVNDDTSEIKYVKSLSIVDVYDMWLTGCRYVVRTANDLSMAVNVPTIRKFIKFGMTLVSIPIDLLNLREIKPVFNVVKAVRNKISACFNFIKWLFVLLFGWIKISADNKVIYTTEVASKLTCKLVALAFKNAFLTFKWSVVARGACIIATIFLLWFNFIYANVIFSDFYLPKIGFLPTFVGKIAQWIKSTFSLVTICDLYSIQDVGFKNQYCNGSIACQFCLAGFDMLDNYKAIDVVQYEADRRAFVDYTGVLKIVIELIVSYALYTAWFYPLFALISIQILTTWLPELFMLSTLHWSVRLLVSLANMLPAHVFMRFYIIIASFIKLFSLFRHVAYGCSKPGCLFCYKRNRSLRVKCSTIVGGMIRYYDVMANGGTGFCSKHQWNCIDCDSYKPGNTFITVEAALDLSKELKRPIQPTDVAYHTVTDVKQVGCYMRLFYERDGQRTYDDVNASLFVDYSNLLHSKVKGVPNMHVVVVENDADKANFLNAAVFYAQSLFRPILMVDKNLITTANTGTSVTETMFDVYVDTFLSMFDVDKKSLNALIATAHSSIKQGTQICKVLDTFLSCARKSCSIDSDVDTKCLADSVMSAVSAGLELTDESCNNLVPTYLKGDNIVAADLGVLIQNSAKHVQGNVAKIAGVSCIWSVDAFNQLSSDFQHKLKKACCKTGLKLKLTYNKQMANVSVLTTPFSLKGGAVFSYFVYVCFLLSLVCFIGLWCLMPTYTVHKSDFQLPVYTSYKVLDNGVIRDVSVEDVCFANKFEQFDQWYESTFGLSYYSNSMACPIVVAVVDQDLGSTVFNVPTKVLRYGYHVLHFITHALSADGVQCYTPHSQISYSNFYASGCVLSSACTMFAMADGSPQPYCYTEGLMQNASLYSSLVPHVRYNLANAKGFIRFPEVLREGLVRIVRTRSMSYCRVGLCEEADEGICFNFNGSWVLNNDYYRSLPGTFCGRDVFDLIYQLFKGLAQPVDFLALTASSIAGAILAVIVVLVFYYLIKLKRAFGDYTSIVFVNVIVWCVNFMMLFVFQVYPTLSCVYAICYFYATLYFPSEISVIMHLQWLVMYGTIMPLWFCLLYISVVVSNHAFWVFAYCRRLGTSVRSDGTFEEMALTTFMITKDSYCKLKNSLSDVAFNRYLSLYNKYRYYSGKMDTAAYREAACSQLAKAMDTFTNNNGSDVLYQPPTASVSTSFLQSGIVKMVNPTSKVEPCIVSVTYGNMTLNGLWLDDKVYCPRHVICSASDMTNPDYTNLLCRVTSSDFTVLFDRLSLTVMSYQMQGCMLVLTVTLQNSRTPKYTFGVVKPGETFTVLAAYNGKPQGAFHVTMRSSYTIKGSFLCGSCGSVGYVLMGDCVKFVYMHQLELSTGCHTGTDFNGDFYGPYKDAQVVQLPVQDYIQSVNFVAWLYAAILNNCNWFVQSDKCSVEDFNVWALSNGFSQVKSDLVIDALASMTGVSLETLLAAIKRLKNGFQGRQIMGSCSFEDELTPSDVYQQLAGIKLQSKRTRLVKGIVCWIMASTFLFSCIITAFVKWTMFMYVTTNMLSITFCALCVISLAMLLVKHKHLYLTMYIIPVLFTLLYNNYLVVYKQTFRGYVYAWLSYYVPSVEYTYTDEVIYGMLLLIGMVFVTLRSINHDLFSFIMFVGRVISVVSLWYMGSNLEEEILLMLASLFGTYTWTTALSMAAAKVIAKWVAVNVLYFTDIPQIKIVLVCYLFIGYIISCYWGLFSLMNSLFRMPLGVYNYKISVQELRYMNANGLRPPKNSFEALMLNFKLLGIGGVPIIEVSQFQSKLTDVKCANVVLLNCLQHLHVASNSKLWQYCSTLHNEILATSDLGVAFEKLAQLLIVLFANPAAVDSKCLTSIEEVCDDYAKDNTVLQALQSEFVNMASFVEYEVAKKNLDEARSSGSANQQQLKQLEKACNIAKSAYERDRAVARKLERMADLALTNMYKEARINDKKSKVVSALQTMLFSMVRKLDNQALNSILDNAVKGCVPLNAIPSLAANTLTIIVPDKSVYDQVVDNVYVTYAGNVWQIQTIQDSDGTNKQLNEISDDCNWPLVIIANRHNEVSATVLQNNELMPAKLKTQVVNSGPDQTCNTPTQCYYNNSNNGKIVYAILSDVDGLKYTKILKDDGNFVVLELDPPCKFTVQDVKGLKIKYLYFVKGCNTLARGWVVGTISSTVRLQAGTATEYASNSSILSLCAFSVDPKKTYLDFIQQGGTPIANCVKMLCDHAGTGMAITVKPDATTNQDSYGGASVCIYCRARVEHPDVDGLCKLRGKFVQVPVGIKDPVSYVLTHDVCQVCGFWRDGSCSCVSTDTTVQSKDTNFLNRVRGTSVDARLVPCASGLSTDVQLRAFDICNASVAGIGLHLKVNCCRFQRVDENGDKLDQFFVVKRTDLTIYNREMECYERVKDCKFVAEHDFFTFDVEGSRVPHIVRKDLTKYTMLDLCYALRHFDRNDCMLLCDILSIYAGCEQSYFTKKDWYDFVENPDIINVYKKLGPIFNRALVSATEFADKLVEVGLVGILTLDNQDLNGKWYDFGDYVIAAPGCGVAIADSYYSYMMPMLTMCHALDCELYVNNAYRLFDLVQYDFTDYKLELFNKYFKHWSMPYHPNTVDCQDDRCIIHCANFNILFSMVLPNTCFGPLVRQIFVDGVPFVVSIGYHYKELGIVMNMDVDTHRYRLSLKDLLLYAADPALHVASASALYDLRTCCFSVAAITSGVKFQTVKPGNFNQDFYDFILSKGLLKEGSSVDLKHFFFTQDGNAAITDYNYYKYNLPTMVDIKQLLFVLEVVYKYFEIYDGGCIPASQVIVNNYDKSAGYPFNKFGKARLYYEALSFEEQDEIYAYTKRNVLPTLTQMNLKYAISAKNRARTVAGVSILSTMTGRMFHQKCLKSIAATRGVPVVIGTTKFYGGWDDMLRRLIKDVDNPVLMGWDYPKCDRAMPNILRIVSSLVLARKHEACCSQSDRFYRLANECAQVLSEIVMCGGCYYVKPGGTSSGDATTAFANSVFNICQAVSANVCALMSCNGNKIEDLSIRALQKRLYSHVYRSDMVDSTFVTEYYEFLNKHFSMMILSDDGVVCYNSDYASKGYIANISAFQQVLYYQNNVFMSESKCWVENDINNGPHEFCSQHTMLVKMDGDDVYLPYPDPSRILGAGCFVDDLLKTDSVLLIERFVSLAIDAYPLVYHENEEYQKVFRVYLEYIKKLYNDLGNQILDSYSVILSTCDGQKFTDESFYKNMYLRSAVMQSVGACVVCSSQTSLRCGSCIRKPLLCCKCCYDHVMATDHKYVLSVSPYVCNAPGCDVNDVTKLYLGGMSYYCEDHKPQYSFKLVMNGMVFGLYKQSCTGSPYIDDFNRIASCKWTDVDDYILANECTERLKLFAAETQKATEEAFKQSYASATIQEIVSERELILSWEIGKVKPPLNKNYVFTGYHFTKNGKTVLGEYVFDKSELTNGVYYRATTTYKLSVGDVFVLTSHSVANLSAPTLVPQENYSSIRFASVYSVLETFQNNVVNYQHIGMKRYCTVQGPPGTGKSHLAIGLAVYYCTARVVYTAASHAAVDALCEKAYKFLNINDCTRIVPAKVRVECYDKFKINDTTRKYVFTTINALPEMVTDIVVVDEVSMLTNYELSVINARIRAKHYVYIGDPAQLPAPRVLLSKGTLEPKYFNTVTKLMCCLGPDIFLGTCYRCPKEIVDTVSALVYENKLKAKNESSSLCFKVYYKGVTTHESSSAVNMQQIYLINKFLKANPLWHKAVFISPYNSQNFAAKRVLGLQTQTVDSAQGSEYDYVIYSQTAETAHSVNVNRFNVAITRAKKGILCVMSNMQLFEALQFTTLTLDKVPQAVETRVQCSTNLFKDCSKSYSGYHPAHAPSFLAVDDKYKATGDLAVCLGIGDSAVTYSRLISLMGFKLDVTLDGYCKLFITKEEAVKRVRAWVGFDAEGAHATRDSIGTNFPLQLGFSTGIDFVVEATGLFADRDGYSFKKAVAKAPPGEQFKHLIPLMTRGQRWDVVRPRIVQMFADHLIDLSDCVVLVTWAANFELTCLRYFAKVGREISCNVCTKRATAYNSRTGYYGCWRHSVTCDYLYNPLIVDIQQWGYIGSLSSNHDLYCSVHKGAHVASSDAIMTRCLAVYDCFCNNINWNVEYPIISNELSINTSCRVLQRVMLKAAMLCNRYTLCYDIGNPKAIACVKDFDFKFYDAQPIVKSVKTLLYSFEAHKDSFKDGLCMFWNCNVDKYPPNAVVCRFDTRVLNNLNLPGCNGGSLYVNKHAFHTKPFSRAAFEHLKPMPFFYYSDTPCVYMDGMDAKQVDYVPLKSATCITRCNLGGAVCLKHAEEYREYLESYNTATTAGFTFWVYKTFDFYNLWNTFTKLQSLENVVYNLVKTGHYTGQAGEMPCAIINDKVVAKIDKEDVVIFINNTTYPTNVAVELFAKRSIRHHPELKLFRNLNIDVCWKHVIWDYARESIFCSNTYGVCMYTDLKFIDKLNVLFDGRDNGALEAFKRSNNGVYISTTKVKSLSMIKGPPRAELNGVVVDKVGDTDCVFYFAVRKEGQDVIFSQFDSLRVSSNQSPQGNLGSNEPGNVGGNDALATSTIFTQSRVISSFTCRTDMEKDFIALDQDLFIQKYGLEDYAFEHIVYGNFNQKIIGGLHLLIGLYRRQQTSNLVIQEFVSYDSSIHSYFITDEKSGGSKSVCTVIDILLDDFVALVKSLNLNCVSKVVNVNVDFKDFQFMLWCNDEKVMTFYPRLQAASDWKPGYSMPVLYKYLNSPMERVSLWNYGKPVTLPTGCMMNVAKYTQLCQYLNTTTLAVPVNMRVLHLGAGSEKGVAPGSAVLRQWLPAGTILVDNDLYPFVSDSVATYFGDCITLPFDCQWDLIISDMYDPITKNIGEYNVSKDGFFTYICHMIRDKLALGGSVAIKITEFSWNAELYKLMGYFAFWTVFCTNANASSSEGFLIGINYLGKPKVEIDGNVMHANYLFWRNSTVWNGGAYSLFDMAKFPLKLAGTAVINLRADQINDMVYSLLEKGKLLVRDTNKEVFVGDSLVNVI.

The CoV Nsp1 globular domain occupies 54-196 (PENHVMVDCR…PWVMYLRKCG (143 aa)). One can recognise a BetaCoV Nsp1 C-terminal domain in the interval 216–246 (FKVEDAYDLVHDEPKGKFSKKAYALIRGYRG). The 270-residue stretch at 250–519 (LLYVDQYGCD…LICKALYLDY (270 aa)) folds into the CoV Nsp2 N-terminal domain. Zn(2+) is bound by residues Cys-392, Cys-397, Cys-413, and Cys-416. Residues 392 to 416 (CEQDLCDFKGWVPGNMIDGFACTTC) form a C4 region. In terms of domain architecture, CoV Nsp2 middle spans 524-713 (CGNLHQRELL…AQAFRSVAKV (190 aa)). In terms of domain architecture, CoV Nsp2 C-terminal spans 733-851 (RRRICLSGSK…LDQAWRVPCA (119 aa)). The Ubiquitin-like 1 domain maps to 853–966 (RRVTFKEQPT…LYCAFTAPED (114 aa)). Positions 1036-1274 (DLESVIQDYE…IAQLYGSCIT (239 aa)) constitute a Peptidase C16 1 domain. Cys-1074 acts as the For PL1-PRO activity in catalysis. Zn(2+) is bound by residues Cys-1151, Cys-1154, Cys-1177, and Cys-1179. The C4-type 1 zinc-finger motif lies at 1151–1179 (CIKCDLALKLKGLDAMFFYGDVVSHVCKC). Catalysis depends on for PL1-PRO activity residues His-1225 and Asp-1236. A Macro domain is found at 1275 to 1435 (PNVCFVKGDI…LISKCQITAV (161 aa)). In terms of domain architecture, DPUP spans 1491–1563 (DDARTFVQSN…VAQIKALFLD (73 aa)). One can recognise a Ubiquitin-like 2 domain in the interval 1562–1617 (LDKVDILLTVDGVNFTNRFVPVGENFGKSLGNVFCDGVNVTKHKCDINYKGKVFFQ). Positions 1631–1892 (SSFNFDQKEL…KIEYKPDLSQ (262 aa)) constitute a Peptidase C16 2 domain. Residue Cys-1671 is the For PL2-PRO activity of the active site. Residues Cys-1749, Cys-1751, Cys-1783, and Cys-1785 each contribute to the Zn(2+) site. The C4-type 2 zinc-finger motif lies at 1749-1785 (CKCGVKQEQRTGVDAVMHFGTLSREDLEIGYTVDCSC). Active-site for PL2-PRO activity residues include His-1828 and Asp-1842. Positions 1906 to 2007 (IKAQFKTFEK…TYFNRPLLVD (102 aa)) constitute a Nucleic acid-binding domain. The region spanning 2020–2169 (DDGGDISESD…ADNKVIYTTE (150 aa)) is the G2M domain. 3 consecutive transmembrane segments (helical) span residues 2138 to 2158 (ISAC…WIKI), 2199 to 2219 (ACII…NVIF), and 2227 to 2247 (IGFL…TFSL). Residues 2138 to 2385 (ISACFNFIKW…ASFIKLFSLF (248 aa)) are HD1. The 62-residue stretch at 2235–2296 (GKIAQWIKST…AIDVVQYEAD (62 aa)) folds into the 3Ecto domain. 2 disulfide bridges follow: Cys-2251/Cys-2275 and Cys-2266/Cys-2272. The next 3 membrane-spanning stretches (helical) occupy residues 2313 to 2333 (LIVS…LISI), 2343 to 2363 (LFML…ANML), and 2365 to 2385 (AHVF…FSLF). The interval 2383–2473 (SLFRHVAYGC…ELKRPIQPTD (91 aa)) is Y1. The region spanning 2383 to 2750 (SLFRHVAYGC…LTTPFSLKGG (368 aa)) is the CoV Nsp3 Y domain. Zn(2+) contacts are provided by His-2387, Cys-2392, Cys-2397, Cys-2400, Cys-2433, His-2436, Cys-2440, and Cys-2443. The ZF1 stretch occupies residues 2387–2400 (HVAYGCSKPGCLFC). The tract at residues 2433–2443 (CSKHQWNCIDC) is ZF2. The tract at residues 2474–2566 (VAYHTVTDVK…MVDKNLITTA (93 aa)) is Y2. A coV-Y region spans residues 2474-2750 (VAYHTVTDVK…LTTPFSLKGG (277 aa)). The interval 2567 to 2649 (NTGTSVTETM…DSVMSAVSAG (83 aa)) is Y3. The interval 2650-2750 (LELTDESCNN…LTTPFSLKGG (101 aa)) is Y4. The next 7 helical transmembrane spans lie at 2752–2772 (VFSY…IGLW), 2824–2844 (STFG…VAVV), 3009–3029 (VFDL…FLAL), 3031–3051 (ASSI…YYLI), 3063–3083 (IVFV…VFQV), 3090–3110 (VYAI…SVIM), and 3115–3135 (LVMY…SVVV). The HD2 stretch occupies residues 2752-3135 (VFSYFVYVCF…FCLLYISVVV (384 aa)). The Nsp4C domain maps to 3149-3246 (LGTSVRSDGT…TASVSTSFLQ (98 aa)). A Peptidase C30 domain is found at 3247–3549 (SGIVKMVNPT…YQQLAGIKLQ (303 aa)). Residues His-3287 and Cys-3391 each act as for 3CL-PRO activity in the active site. The next 7 membrane-spanning stretches (helical) occupy residues 3558–3578 (GIVC…TAFV), 3588–3608 (TNML…MLLV), 3614–3634 (YLTM…YLVV), 3657–3677 (TYTD…FVTL), 3684–3704 (LFSF…WYMG), 3711–3731 (ILLM…LSMA), and 3755–3775 (IVLV…GLFS). The segment at 3558 to 3775 (GIVCWIMAST…IISCYWGLFS (218 aa)) is HD3. The region spanning 3837–3925 (SKLTDVKCAN…DYAKDNTVLQ (89 aa)) is the RdRp Nsp7 cofactor domain. Positions 3926 to 4122 (ALQSEFVNMA…HNEVSATVLQ (197 aa)) constitute a RdRp Nsp8 cofactor domain. A Nsp9 ssRNA-binding domain is found at 4123 to 4232 (NNELMPAKLK…GTISSTVRLQ (110 aa)). One can recognise an ExoN/MTase coactivator domain in the interval 4233 to 4370 (AGTATEYASN…CVSTDTTVQS (138 aa)). Residues Cys-4306, Cys-4309, His-4315, Cys-4322, Cys-4348, Cys-4351, Cys-4359, and Cys-4361 each coordinate Zn(2+). 2 zinc fingers span residues 4306 to 4322 (CIYC…DGLC) and 4348 to 4361 (CQVC…SCSC). In terms of domain architecture, NiRAN spans 4375–4630 (FLNRVRGTSV…DCELYVNNAY (256 aa)). Mn(2+) contacts are provided by Asn-4578 and Asp-4587. Residues 4631-4729 (RLFDLVQYDF…MNMDVDTHRY (99 aa)) form the Nsp12 Interface domain. Zn(2+) contacts are provided by His-4660, Cys-4666, Cys-4671, Cys-4675, and Cys-4852. Residues 4730–5297 (RLSLKDLLLY…NMYLRSAVMQ (568 aa)) form the Nsp12 RNA-dependent RNA polymerase domain. Residues 4732 to 4946 (SLKDLLLYAA…HQKCLKSIAA (215 aa)) are rdRp Fingers N-ter. The tract at residues 4947–4985 (TRGVPVVIGTTKFYGGWDDMLRRLIKDVDNPVLMGWDYP) is rdRp Palm N-ter. Residues 4977–5139 (PVLMGWDYPK…CYNSDYASKG (163 aa)) form the RdRp catalytic domain. Residues 4986–5044 (KCDRAMPNILRIVSSLVLARKHEACCSQSDRFYRLANECAQVLSEIVMCGGCYYVKPGG) are rdRp Fingers C-ter. The Zn(2+) site is built by His-5007, Cys-5010, and Cys-5011. The rdRp Palm C-ter stretch occupies residues 5045–5180 (TSSGDATTAF…NNGPHEFCSQ (136 aa)). Residues Ser-5124, Asp-5125, and Asp-5126 contribute to the active site. The segment at 5181-5297 (HTMLVKMDGD…NMYLRSAVMQ (117 aa)) is rdRp Thumb. In terms of domain architecture, CV ZBD spans 5298 to 5410 (SVGACVVCSS…DDFNRIASCK (113 aa)). Cys-5302, Cys-5305, Cys-5313, Cys-5316, Cys-5323, Cys-5326, His-5330, His-5336, Cys-5347, Cys-5352, Cys-5369, and His-5372 together coordinate Zn(2+). Residues 5553-5734 (SVLETFQNNV…MCCLGPDIFL (182 aa)) enclose the (+)RNA virus helicase ATP-binding domain. An ATP-binding site is contributed by 5578 to 5585 (GPPGTGKS). In terms of domain architecture, (+)RNA virus helicase C-terminal spans 5735-5904 (GTCYRCPKEI…VETRVQCSTN (170 aa)). Residues 5971–6186 (LFITKEEAVK…RCLAVYDCFC (216 aa)) form the ExoN domain. Active-site residues include Asp-5989, Glu-5991, and Glu-6090. The Zn(2+) site is built by Cys-6106, Cys-6109, Cys-6125, His-6128, His-6156, Cys-6160, and His-6163. Residues His-6167 and Asp-6172 contribute to the active site. A Zn(2+)-binding site is contributed by Cys-6178. Positions 6195–6421 (YPIISNELSI…NLWNTFTKLQ (227 aa)) constitute an N7-MTase domain. 6230-6236 (DIGNPKA) contacts S-adenosyl-L-methionine. Residues 6308–6322 (CNGGSLYVNKHAFHT) are gpppA-binding. Residues Cys-6346, Cys-6367, Cys-6378, and His-6381 each coordinate Zn(2+). The region spanning 6422-6482 (SLENVVYNLV…NVAVELFAKR (61 aa)) is the Nsp15 N-terminal oligomerization domain. Residues 6483–6603 (SIRHHPELKL…FAVRKEGQDV (121 aa)) form the AV-Nsp11N/CoV-Nsp15M domain. The NendoU domain maps to 6653-6792 (TCRTDMEKDF…NDEKVMTFYP (140 aa)). Catalysis depends on residues His-6683, His-6698, Lys-6738, Lys-6841, Asp-6925, Lys-6965, and Glu-6998. Positions 6797–7091 (ASDWKPGYSM…KEVFVGDSLV (295 aa)) constitute a Nidovirus-type SAM-dependent 2'-O-MTase domain.

This sequence belongs to the coronaviruses polyprotein 1ab family. Interacts with host PHB and PHB2. In terms of assembly, interacts with papain-like protease nsp3 and non-structural protein 6. As to quaternary structure, monomer. Homodimer. Only the homodimer shows catalytic activity. Interacts with nsp8 and nsp12 to form the replication-transcription complex (RTC): nsp12, nsp7, two subunits of nsp8, and up to two subunits of nsp13. In terms of assembly, interacts with nsp7, nsp13 and nsp12 to form the replication-transcription complex (RTC): nsp12, nsp7, two subunits of nsp8, and up to two subunits of nsp13. As to quaternary structure, interacts with nsp12. Interacts with proofreading exoribonuclease nsp14 and 2'-O-methyltransferase nsp16; these interactions enhance nsp14 and nsp16 enzymatic activities. In terms of assembly, interacts with nsp7 and nsp8 to form the replication-transcription complex (RTC): nsp12, nsp7, two subunits of nsp8, and up to two subunits of nsp13. Interacts with nsp9. As to quaternary structure, interacts with nsp8 to form the replication-transcription complex (RTC): nsp12, nsp7, two subunits of nsp8, and up to two subunits of nsp13. Mn(2+) serves as cofactor. Mg(2+) is required as a cofactor. Specific enzymatic cleavages in vivo by its own proteases yield mature proteins. 3CL-PRO and PL-PRO proteinases are autocatalytically processed.

The protein resides in the host membrane. It localises to the host cytoplasm. Its subcellular location is the host perinuclear region. It is found in the host endoplasmic reticulum-Golgi intermediate compartment. The catalysed reaction is RNA(n) + a ribonucleoside 5'-triphosphate = RNA(n+1) + diphosphate. It catalyses the reaction ATP + H2O = ADP + phosphate + H(+). It carries out the reaction Thiol-dependent hydrolysis of ester, thioester, amide, peptide and isopeptide bonds formed by the C-terminal Gly of ubiquitin (a 76-residue protein attached to proteins as an intracellular targeting signal).. The enzyme catalyses a 5'-end (N(7)-methyl 5'-triphosphoguanosine)-ribonucleoside in mRNA + S-adenosyl-L-methionine = a 5'-end (N(7)-methyl 5'-triphosphoguanosine)-(2'-O-methyl-ribonucleoside) in mRNA + S-adenosyl-L-homocysteine + H(+). The catalysed reaction is uridylyl-uridylyl-ribonucleotide-RNA = a 3'-end uridylyl-2',3'-cyclophospho-uridine-RNA + a 5'-end dephospho-ribonucleoside-RNA. It catalyses the reaction a 5'-end diphospho-ribonucleoside in mRNA + GTP + H(+) = a 5'-end (5'-triphosphoguanosine)-ribonucleoside in mRNA + diphosphate. It carries out the reaction a 5'-end (5'-triphosphoguanosine)-ribonucleoside in mRNA + S-adenosyl-L-methionine = a 5'-end (N(7)-methyl 5'-triphosphoguanosine)-ribonucleoside in mRNA + S-adenosyl-L-homocysteine. The replicase polyprotein of coronaviruses is a multifunctional protein: it contains the activities necessary for the transcription of negative stranded RNA, leader RNA, subgenomic mRNAs and progeny virion RNA as well as proteinases responsible for the cleavage of the polyprotein into functional products. In terms of biological role, inhibits host translation by interacting with the 40S ribosomal subunit. The nsp1-40S ribosome complex further induces an endonucleolytic cleavage near the 5'UTR of host mRNAs, targeting them for degradation. Viral mRNAs are not susceptible to nsp1-mediated endonucleolytic RNA cleavage thanks to the presence of a 5'-end leader sequence and are therefore protected from degradation. By suppressing host gene expression, nsp1 facilitates efficient viral gene expression in infected cells and evasion from host immune response. Its function is as follows. May play a role in the modulation of host cell survival signaling pathway by interacting with host PHB and PHB2. Indeed, these two proteins play a role in maintaining the functional integrity of the mitochondria and protecting cells from various stresses. Functionally, responsible for the cleavages located at the N-terminus of the replicase polyprotein. In addition, PL-PRO possesses a deubiquitinating/deISGylating activity and processes both 'Lys-48'- and 'Lys-63'-linked polyubiquitin chains from cellular substrates. Participates together with nsp4 in the assembly of virally-induced cytoplasmic double-membrane vesicles necessary for viral replication. Antagonizes innate immune induction of type I interferon by blocking the phosphorylation, dimerization and subsequent nuclear translocation of host IRF3. Also prevents host NF-kappa-B signaling. Participates in the assembly of virally-induced cytoplasmic double-membrane vesicles necessary for viral replication. In terms of biological role, cleaves the C-terminus of replicase polyprotein at 11 sites. Recognizes substrates containing the core sequence [ILMVF]-Q-|-[SGACN]. Also able to bind an ADP-ribose-1''-phosphate (ADRP). Its function is as follows. Plays a role in the initial induction of autophagosomes from host endoplasmic reticulum. Later, limits the expansion of these phagosomes that are no longer able to deliver viral components to lysosomes. Functionally, forms a hexadecamer with nsp8 (8 subunits of each) that may participate in viral replication by acting as a primase. Alternatively, may synthesize substantially longer products than oligonucleotide primers. Forms a hexadecamer with nsp7 (8 subunits of each) that may participate in viral replication by acting as a primase. Alternatively, may synthesize substantially longer products than oligonucleotide primers. In terms of biological role, forms a primer, NSP9-pU, which is utilized by the polymerase for the initiation of RNA chains. Interacts with ribosome signal recognition particle RNA (SRP). Together with NSP8, suppress protein integration into the cell membrane, thereby disrupting host immune defenses. Its function is as follows. Plays a pivotal role in viral transcription by stimulating both nsp14 3'-5' exoribonuclease and nsp16 2'-O-methyltransferase activities. Therefore plays an essential role in viral mRNAs cap methylation. Functionally, RNA-directed RNA polymerase that catalyzes the transcription of viral genomic and subgenomic RNAs. Acts in complex with nsp7 and nsp8 to transcribe both the minus and positive strands of genomic RNA. The kinase-like NiRAN domain of NSP12 attaches one or more nucleotides to the amino terminus of NSP9, forming a covalent RNA-protein intermediate that serves as transcription/replication primer. Subgenomic RNAs (sgRNAs) are formed by discontinuous transcription: The polymerase has the ability to pause at transcription-regulating sequences (TRS) and jump to the leader TRS, resulting in a major deletion. This creates a series of subgenomic RNAs that are replicated, transcribed and translated. In addition, Nsp12 is a subunit of the viral RNA capping enzyme that catalyzes the RNA guanylyltransferase reaction for genomic and sub-genomic RNAs. Subsequently, the NiRAN domain transfers RNA to GDP, and forms the core cap structure GpppA-RNA. Multi-functional protein with a zinc-binding domain in N-terminus displaying RNA and DNA duplex-unwinding activities with 5' to 3' polarity. Activity of helicase is dependent on magnesium. In terms of biological role, plays a role in viral RNA synthesis through two distinct activities. The N7-guanine methyltransferase activity plays a role in the formation of the cap structure GpppA-RNA. The proofreading exoribonuclease reduces the sensitivity of the virus to RNA mutagens during replication. This activity acts on both ssRNA and dsRNA in a 3'-5' direction. Its function is as follows. Plays a role in viral transcription/replication and prevents the simultaneous activation of host cell dsRNA sensors, such as MDA5/IFIH1, OAS, and PKR. Acts by degrading the 5'-polyuridines generated during replication of the poly(A) region of viral genomic and subgenomic RNAs. Catalyzes a two-step reaction in which a 2'3'-cyclic phosphate (2'3'-cP) is first generated by 2'-O transesterification, which is then hydrolyzed to a 3'-phosphate (3'-P). If not degraded, poly(U) RNA would hybridize with poly(A) RNA tails and activate host dsRNA sensors. Functionally, methyltransferase that mediates mRNA cap 2'-O-ribose methylation to the 5'-cap structure of viral mRNAs. N7-methyl guanosine cap is a prerequisite for binding of nsp16. Therefore plays an essential role in viral mRNAs cap methylation which is essential to evade immune system. This Bos taurus (Bovine) protein is Replicase polyprotein 1ab (rep).